The primary structure comprises 436 residues: uncharacterized protein (436 aa).

A signal peptide spans 1–19; it reads MKKLLLASIIGLASTTSFA.

This is an uncharacterized protein from Rickettsia bellii (strain RML369-C).